Here is a 383-residue protein sequence, read N- to C-terminus: MILSPADQERIETFWNYCLKHQYFNIGYPESADFDYSALFRFFKFSINNCGDWKDYSNYALNSFDFEKDVMAYFAEIFQIPFEESWGYVTNGGTEGNMFGCYLARELFSDSTLYYSKDTHYSVGKIAKLLQMKSCVIESLDNGEIDYDDLIHKIKTNKESHPIIFANIGTTMTGAIDDIEMIQERLAQIGIMRRDYYIHADAALSGMILPFVDHPQAFSFAHGIDSICVSGHKMIGSPIPCGIVVAKRQNVERISVDVDYISTRDQTISGSRNGHTVLLMWAAIRSQTNLQRRQRIQHCLKMAQYAVDRFQAVGIPAWRNPNSITVVFPCPSEHIWKKHYLATSGNMAHLITTAHHRDTRQIDSLIDDVIFDLQGASKRTVGF.

Residue H120 participates in substrate binding. K233 bears the N6-(pyridoxal phosphate)lysine mark.

It belongs to the group II decarboxylase family. In terms of assembly, homotetramer. Pyridoxal 5'-phosphate serves as cofactor.

The enzyme catalyses L-histidine + H(+) = histamine + CO2. The chain is Histidine decarboxylase from Acinetobacter baumannii (strain AB307-0294).